A 189-amino-acid polypeptide reads, in one-letter code: Interferon alpha-14 (189 aa).

Positions 1–23 (MALPFALMMALVVLSCKSSCSLG) are cleaved as a signal peptide. Cystine bridges form between Cys24–Cys122 and Cys52–Cys162. Asn95 is a glycosylation site (N-linked (GlcNAc...) asparagine).

Belongs to the alpha/beta interferon family.

It localises to the secreted. Its function is as follows. Produced by macrophages, IFN-alpha have antiviral activities. Interferon stimulates the production of two enzymes: a protein kinase and an oligoadenylate synthetase. This Homo sapiens (Human) protein is Interferon alpha-14 (IFNA14).